The sequence spans 79 residues: U16-theraphotoxin-Cg1a (79 aa).

The N-terminal stretch at 1–19 is a signal peptide; the sequence is MRALLIIAGLALFLVVCNA. The propeptide occupies 20–44; it reads SQVNEQRKLNEMLSVMFAVEEPQER. 3 cysteine pairs are disulfide-bonded: Cys-47-Cys-62, Cys-54-Cys-67, and Cys-61-Cys-74.

This sequence belongs to the neurotoxin 10 (Hwtx-1) family. 34 (Jztx-26) subfamily. In terms of tissue distribution, expressed by the venom gland.

The protein localises to the secreted. In terms of biological role, probable ion channel inhibitor. The polypeptide is U16-theraphotoxin-Cg1a (Chilobrachys guangxiensis (Chinese earth tiger tarantula)).